A 357-amino-acid polypeptide reads, in one-letter code: Uroporphyrinogen decarboxylase (357 aa).

Residues 27-31 (RQAGR), D77, Y154, S209, and H330 each bind substrate.

The protein belongs to the uroporphyrinogen decarboxylase family. Homodimer.

The protein localises to the cytoplasm. It carries out the reaction uroporphyrinogen III + 4 H(+) = coproporphyrinogen III + 4 CO2. It participates in porphyrin-containing compound metabolism; protoporphyrin-IX biosynthesis; coproporphyrinogen-III from 5-aminolevulinate: step 4/4. Catalyzes the decarboxylation of four acetate groups of uroporphyrinogen-III to yield coproporphyrinogen-III. The chain is Uroporphyrinogen decarboxylase from Acinetobacter baumannii (strain SDF).